We begin with the raw amino-acid sequence, 462 residues long: Serine carboxypeptidase-like 28 (462 aa).

Positions 1-26 are cleaved as a signal peptide; it reads MMITKKLYQCMCLLCMVIALLDVVSS. Residues Asn49 and Asn144 are each glycosylated (N-linked (GlcNAc...) asparagine). Disulfide bonds link Cys93–Cys342, Cys254–Cys266, and Cys290–Cys311. Ser186 is a catalytic residue. Asn256 carries an N-linked (GlcNAc...) asparagine glycan. Asn334 is a glycosylation site (N-linked (GlcNAc...) asparagine). Catalysis depends on residues Asp379 and His434. Asn454 carries an N-linked (GlcNAc...) asparagine glycan.

It belongs to the peptidase S10 family. Expressed in seedlings, roots and senescent leaves.

It localises to the secreted. Its function is as follows. Probable carboxypeptidase. The sequence is that of Serine carboxypeptidase-like 28 (SCPL28) from Arabidopsis thaliana (Mouse-ear cress).